A 195-amino-acid polypeptide reads, in one-letter code: MNRKGILFVISGPSGVGKGTLKKALLDQTKDLNLSISATTRPARLGEVHGQHYFFVDQAKFREMIEQDAFLEWAQVYSNLYGTPRGFVLNHLQQGRDVLLEIDIQGALQVKEKMPSGVFIFIYPPNLEELAFRLVSRGQDSQDSIEARLAACENELKHIDYYDYLVVNDKIDRALQKITAIIIAERCKIKNLNMR.

Positions 5-183 constitute a Guanylate kinase-like domain; that stretch reads GILFVISGPS…ALQKITAIII (179 aa). 12-19 provides a ligand contact to ATP; sequence GPSGVGKG.

The protein belongs to the guanylate kinase family.

It localises to the cytoplasm. The catalysed reaction is GMP + ATP = GDP + ADP. Essential for recycling GMP and indirectly, cGMP. In Syntrophomonas wolfei subsp. wolfei (strain DSM 2245B / Goettingen), this protein is Guanylate kinase.